Reading from the N-terminus, the 37-residue chain is Large ribosomal subunit protein bL36c (37 aa).

This sequence belongs to the bacterial ribosomal protein bL36 family.

Its subcellular location is the plastid. The protein localises to the chloroplast. This chain is Large ribosomal subunit protein bL36c, found in Phalaenopsis aphrodite subsp. formosana (Moth orchid).